Reading from the N-terminus, the 250-residue chain is Type-1Ab cytolytic delta-endotoxin (250 aa).

It belongs to the cyt1/cyt2 endotoxin family. Post-translationally, active after proteolytic processing.

Kills the larvae of dipteran insects by making pores in the epithelial cell membrane of the insect midgut. The protein is Type-1Ab cytolytic delta-endotoxin (cyt1Ab1) of Bacillus thuringiensis subsp. medellin.